A 4328-amino-acid chain; its full sequence is Cadherin-4 (4328 aa).

Positions 1 to 23 are cleaved as a signal peptide; the sequence is MKKHRVFHLFLLIFCKAISLVTT. Residues 24–4072 are Extracellular-facing; that stretch reads SSSTEQIFEF…TVLEFLLKAE (4049 aa). N39 and N56 each carry an N-linked (GlcNAc...) asparagine glycan. Cadherin domains lie at 108–153 and 156–275; these read PLNR…SPVF and GEQG…NPNI. N196, N330, N339, N365, N431, N452, and N584 each carry an N-linked (GlcNAc...) asparagine glycan. Cadherin domains lie at 384–492, 507–608, 609–720, 721–826, 827–934, 935–1051, 1047–1156, 1175–1262, 1265–1363, 1364–1467, and 1476–1570; these read DNEK…APVF, PGDV…SPVF, SSFP…SPQF, DEVS…PPKC, VVQH…AIEF, DDVA…KPMY, KKPM…SPTF, RIFA…PPEI, KKSD…RPKF, SASH…SPYF, and VDES…APET. N811 and N899 each carry an N-linked (GlcNAc...) asparagine glycan. A Cell attachment site motif is present at residues 1090-1092; it reads RGD. N1192 is a glycosylation site (N-linked (GlcNAc...) asparagine). The segment at 1246-1267 is disordered; it reads NSAGQKPRKSKNSPPEISGKKS. N1335 carries an N-linked (GlcNAc...) asparagine glycan. The N-linked (GlcNAc...) asparagine glycan is linked to N1610. Residues 1671–1784 enclose the Cadherin 14 domain; sequence RRQVYRGTIR…IDENDEPPRF (114 aa). N-linked (GlcNAc...) asparagine glycosylation is present at N1895. In terms of domain architecture, Cadherin 15 spans 1917 to 1984; it reads FSIVNPHEAF…ENINDETPIF (68 aa). N2059, N2150, N2216, N2367, N2413, N2440, and N2535 each carry an N-linked (GlcNAc...) asparagine glycan. Cadherin domains follow at residues 2187-2285 and 2286-2397; these read EKLK…MPEF and IRSD…PPRF. Cadherin domains lie at 2429 to 2505, 2506 to 2608, 2609 to 2712, 2719 to 2813, 2828 to 2915, 2913 to 3011, 3012 to 3113, 3114 to 3216, and 3217 to 3326; these read LQFS…PPFF, VLPF…VPRF, SNSH…APAF, FTIS…PPQF, SPIL…CPEA, PEAN…RPKI, IEKL…APTF, EKST…APKF, and EKEK…APTF. N-linked (GlcNAc...) asparagine glycosylation is found at N2844, N2916, N2941, N3083, and N3143. N-linked (GlcNAc...) asparagine glycosylation is present at N3330. Cadherin domains are found at residues 3335–3428 and 3429–3554; these read VQEG…APTM and KPMK…VDEF. N-linked (GlcNAc...) asparagine glycosylation occurs at N3512. Residues 3706-3744 enclose the EGF-like 1 domain; it reads ETNQCAKSPCEQWQLCIPSVHNSTYECVCPLGMEGDKCS. 10 cysteine pairs are disulfide-bonded: C3710-C3721, C3715-C3732, C3734-C3743, C3898-C3925, C3933-C3944, C3938-C3954, C3956-C3965, C3972-C3983, C3977-C3992, and C3994-C4003. A glycan (N-linked (GlcNAc...) asparagine) is linked at N3727. Positions 3757–3925 constitute a Laminin G-like domain; it reads EAELSVGGDG…MKLFGAQPGC (169 aa). 2 consecutive EGF-like domains span residues 3929–3966 and 3968–4004; these read TSSPCNDLPCQHAGTCISQGKSHFKCECPSRYSGNVCE and DLEPCASSPCPTGIQCIPFYNDYLCKCPNGFTGKHCE. N4043 carries an N-linked (GlcNAc...) asparagine glycan. Residues 4073–4093 traverse the membrane as a helical segment; it reads IVIVILGVLLLLLVFCLTFIT. Over 4094–4328 the chain is Cytoplasmic; sequence WKCCKKNRDP…IDEEVNIHIS (235 aa). Disordered regions lie at residues 4143 to 4215 and 4268 to 4311; these read TSSV…SSLR and NFER…PISL. Over residues 4178-4196 the composition is skewed to basic and acidic residues; it reads TRRDPLPSDKFRRVDETAN. The short motif at 4207 to 4209 is the Cell attachment site element; the sequence is RGD.

As to expression, in larvae and adult, it is expressed in various tissues including pharyngeal muscle, hypodermis and gonad. In the nervous system it is expressed in sensory neurons and motor neurons in the ventral cord.

It is found in the cell membrane. Potential calcium-dependent cell-adhesion protein that controls axon guidance in the ventral cord. This Caenorhabditis elegans protein is Cadherin-4.